Consider the following 63-residue polypeptide: Transmembrane protein 033R (63 aa).

This chain is Transmembrane protein 033R, found in Dryophytes versicolor (chameleon treefrog).